Reading from the N-terminus, the 293-residue chain is Formamidopyrimidine-DNA glycosylase (293 aa).

Catalysis depends on Pro2, which acts as the Schiff-base intermediate with DNA. Residue Glu3 is the Proton donor of the active site. Lys58 acts as the Proton donor; for beta-elimination activity in catalysis. His104, Arg127, and Arg170 together coordinate DNA. An FPG-type zinc finger spans residues 257–293 (SVYGREGKPCRNPACGGTVERVVQSGRSTFFCASCQT). The Proton donor; for delta-elimination activity role is filled by Arg283.

It belongs to the FPG family. As to quaternary structure, monomer. Zn(2+) is required as a cofactor.

It catalyses the reaction Hydrolysis of DNA containing ring-opened 7-methylguanine residues, releasing 2,6-diamino-4-hydroxy-5-(N-methyl)formamidopyrimidine.. The enzyme catalyses 2'-deoxyribonucleotide-(2'-deoxyribose 5'-phosphate)-2'-deoxyribonucleotide-DNA = a 3'-end 2'-deoxyribonucleotide-(2,3-dehydro-2,3-deoxyribose 5'-phosphate)-DNA + a 5'-end 5'-phospho-2'-deoxyribonucleoside-DNA + H(+). Its function is as follows. Involved in base excision repair of DNA damaged by oxidation or by mutagenic agents. Acts as a DNA glycosylase that recognizes and removes damaged bases. Has a preference for oxidized purines, such as 7,8-dihydro-8-oxoguanine (8-oxoG). Has AP (apurinic/apyrimidinic) lyase activity and introduces nicks in the DNA strand. Cleaves the DNA backbone by beta-delta elimination to generate a single-strand break at the site of the removed base with both 3'- and 5'-phosphates. The protein is Formamidopyrimidine-DNA glycosylase of Brucella canis (strain ATCC 23365 / NCTC 10854 / RM-666).